The chain runs to 62 residues: Lepidopteran-selective toxin (62 aa).

Residues 1–24 form the signal peptide; the sequence is MKFLYGVILIALFLTVMTATLSEA. 4 cysteine pairs are disulfide-bonded: C26-C43, C29-C51, C40-C56, and C44-C58. Y62 is a propeptide.

This sequence belongs to the short scorpion toxin superfamily. Chloride channel inhibitor family. Expressed by the venom gland.

Its subcellular location is the secreted. Its function is as follows. Toxin with unknown function in healthy organisms. On glioma cells, interacts with chloride channels (probably ClC-3/CLCN3) and MMP2 at the surface of glioma cells. This complex is then internalized via caveolae, thus inhibiting the chloride channels necessary for cell shrinkage and tumor propagation. Induces flaccid paralysis in H.virescens larvae. Is not toxic to S.falculata larvae or mice. The sequence is that of Lepidopteran-selective toxin from Hottentotta tamulus (Eastern Indian scorpion).